The sequence spans 611 residues: Procollagen galactosyltransferase 1-B (611 aa).

The signal sequence occupies residues 1–24 (MSQAGVERLLKGLQILVLVLRLSA). N-linked (GlcNAc...) asparagine glycosylation is found at Asn85, Asn173, Asn370, Asn373, and Asn568. The span at 576–591 (DRAKSRKTHQQEKLRS) shows a compositional bias: basic and acidic residues. Residues 576–611 (DRAKSRKTHQQEKLRSEALNTPSMGSPFDNTARDEL) are disordered. Residues 608-611 (RDEL) carry the Prevents secretion from ER motif.

The protein belongs to the glycosyltransferase 25 family.

Its subcellular location is the endoplasmic reticulum lumen. It carries out the reaction (5R)-5-hydroxy-L-lysyl-[collagen] + UDP-alpha-D-galactose = (5R)-5-O-(beta-D-galactosyl)-5-hydroxy-L-lysyl-[collagen] + UDP + H(+). Beta-galactosyltransferase that transfers beta-galactose to hydroxylysine residues of type I collagen. By acting on collagen glycosylation, facilitates the formation of collagen triple helix. The polypeptide is Procollagen galactosyltransferase 1-B (colgalt1-b) (Xenopus laevis (African clawed frog)).